A 259-amino-acid polypeptide reads, in one-letter code: Bisphosphoglycerate mutase (259 aa).

Ser-2 is modified (N-acetylserine). Substrate is bound by residues 10-17, 23-24, Arg-62, 89-92, Arg-100, and 116-117; these read RHGEGAWN, CS, ERHY, and RR. The active-site Tele-phosphohistidine intermediate is the His-11. Glu-89 functions as the Proton donor/acceptor in the catalytic mechanism. Thr-122 carries the phosphothreonine modification. Residue 189–190 participates in substrate binding; the sequence is GN.

This sequence belongs to the phosphoglycerate mutase family. BPG-dependent PGAM subfamily. Homodimer.

The catalysed reaction is (2R)-3-phospho-glyceroyl phosphate = (2R)-2,3-bisphosphoglycerate + H(+). The enzyme catalyses (2R)-2-phosphoglycerate = (2R)-3-phosphoglycerate. At alkaline pH BPGM favors the synthase reaction; however, at lower pH the phosphatase reaction is dominant. Inhibited by citrate. Plays a major role in regulating hemoglobin oxygen affinity by controlling the levels of its allosteric effector 2,3-bisphosphoglycerate (2,3-BPG). Also exhibits mutase (EC 5.4.2.11) activity. This Bos taurus (Bovine) protein is Bisphosphoglycerate mutase (BPGM).